A 554-amino-acid chain; its full sequence is Rab GTPase-binding effector protein 2 (554 aa).

The segment covering 1–15 has biased composition (low complexity); that stretch reads MAAAPAALALDPQPQ. Disordered regions lie at residues 1 to 29, 167 to 250, and 375 to 395; these read MAAAPAALALDPQPQEEQKDASESSELSR, IQRR…ETAS, and EQLPSSALQGSEQQEDQDEAL. A coiled-coil region spans residues 15-173; sequence QEEQKDASES…IQEIQRRPRQ (159 aa). A compositionally biased stretch (basic and acidic residues) spans 16-29; the sequence is EEQKDASESSELSR. Ser176, Ser180, Ser187, and Ser191 each carry phosphoserine. The stretch at 274–512 forms a coiled coil; the sequence is DSQWEQLQVE…LETSEQVQRD (239 aa). Over residues 377–386 the composition is skewed to polar residues; sequence LPSSALQGSE.

It belongs to the rabaptin family. In terms of assembly, heterodimer with RABGEF1. The dimer binds RAB5A that has been activated by GTP-binding. Interacts with SDCCAG8; this interaction is important for ciliogenesis regulation. Interacts with RAB4A; this interaction may mediate VEGFR2 cell surface expression.

It localises to the cytoplasm. Its subcellular location is the early endosome. The protein resides in the cytoskeleton. It is found in the microtubule organizing center. The protein localises to the centrosome. It localises to the cilium basal body. Plays a role in membrane trafficking and in homotypic early endosome fusion. Participates in arteriogenesis by regulating vascular endothelial growth factor receptor 2/VEGFR2 cell surface expression and endosomal trafficking. By interacting with SDCCAG8, localizes to centrosomes and plays a critical role in ciliogenesis. The protein is Rab GTPase-binding effector protein 2 (Rabep2) of Rattus norvegicus (Rat).